The sequence spans 341 residues: Beta-ketoacyl-[acyl-carrier-protein] synthase III 1 (341 aa).

Residues Cys-113 and His-249 contribute to the active site. The ACP-binding stretch occupies residues 250–254 (QANIR). The active site involves Asn-279.

This sequence belongs to the thiolase-like superfamily. FabH family. As to quaternary structure, homodimer.

It localises to the cytoplasm. It catalyses the reaction malonyl-[ACP] + acetyl-CoA + H(+) = 3-oxobutanoyl-[ACP] + CO2 + CoA. Its pathway is lipid metabolism; fatty acid biosynthesis. Functionally, catalyzes the condensation reaction of fatty acid synthesis by the addition to an acyl acceptor of two carbons from malonyl-ACP. Catalyzes the first condensation reaction which initiates fatty acid synthesis and may therefore play a role in governing the total rate of fatty acid production. Possesses both acetoacetyl-ACP synthase and acetyl transacylase activities. Its substrate specificity determines the biosynthesis of branched-chain and/or straight-chain of fatty acids. This chain is Beta-ketoacyl-[acyl-carrier-protein] synthase III 1, found in Deinococcus radiodurans (strain ATCC 13939 / DSM 20539 / JCM 16871 / CCUG 27074 / LMG 4051 / NBRC 15346 / NCIMB 9279 / VKM B-1422 / R1).